A 325-amino-acid polypeptide reads, in one-letter code: Phospholipid phosphatase-related protein type 1 (325 aa).

Asn-5 is a glycosylation site (N-linked (GlcNAc...) asparagine). 3 consecutive transmembrane segments (helical) span residues 13 to 33, 67 to 87, and 127 to 147; these read IIPC…LLAY, FITP…IIFI, and FTGV…AGQV. N-linked (GlcNAc...) asparagine glycosylation occurs at Asn-163. Transmembrane regions (helical) follow at residues 201–218, 230–247, and 257–277; these read AALS…ITST, VLCL…LNRV, and VIAG…CVVH. Ser-307 carries the phosphoserine modification. Asn-316 carries N-linked (GlcNAc...) asparagine glycosylation.

Belongs to the PA-phosphatase related phosphoesterase family.

It is found in the cell membrane. It localises to the cell projection. The protein localises to the neuron projection. Its function is as follows. May play a role in neurite outgrowth and neurogenesis. The protein is Phospholipid phosphatase-related protein type 1 of Homo sapiens (Human).